A 109-amino-acid polypeptide reads, in one-letter code: Large ribosomal subunit protein uL22 (109 aa).

This sequence belongs to the universal ribosomal protein uL22 family. Part of the 50S ribosomal subunit.

Functionally, this protein binds specifically to 23S rRNA; its binding is stimulated by other ribosomal proteins, e.g. L4, L17, and L20. It is important during the early stages of 50S assembly. It makes multiple contacts with different domains of the 23S rRNA in the assembled 50S subunit and ribosome. In terms of biological role, the globular domain of the protein is located near the polypeptide exit tunnel on the outside of the subunit, while an extended beta-hairpin is found that lines the wall of the exit tunnel in the center of the 70S ribosome. This is Large ribosomal subunit protein uL22 from Dechloromonas aromatica (strain RCB).